A 1392-amino-acid polypeptide reads, in one-letter code: MDTEDDPLLQDVWLEEEQEEEEATGETFLGAQKPGPQPGAGGQCCWRHWPLASRPPASGFWSTLGWAFTNPCCAGLVLFLGCSIPMALSAFMFLYYPPLDIDISYNAFEIRNHEASQRFDALTLALKSQFGSWGRNRRDLADFTSETLQRLISEQLQQLHLGNRSRQASRAPRVIPAASLGGPGPYRDTSAAQKPTANRSGRLRRETPPLEDLAANQSEDPRNQRLSKNGRYQPSIPPHAAVAANQSRARRGASRWDYSRAYVSANTQTHAHWRIELIFLARGDAERNIFTSERLVTIHEIERKIMDHPGFREFCWKPHEVLKDLPLGSYSYCSPPSSLMTYFFPTERGGKIYYDGMGQDLADIRGSLELAMTHPEFYWYVDEGLSADNLKSSLLRSEILFGAPLPNYYSVDDRWEEQRAKFQSFVVTYVAMLAKQSTSKVQVLYGGTDLFDYEVRRTFNNDMLLAFISSSCIAALVYILTSCSVFLSFFGIASIGLSCLVALFLYHVVFGIQYLGILNGVAAFVIVGIGVDDVFVFINTYRQATHLEDPQLRMIHTVQTAGKATFFTSLTTAAAYAANVFSQIPAVHDFGLFMSLIVSCCWLAVLVTMPAALGLWSLYLAPLESSCQTSCHQNCSRKTSLHFPGDVFAAPEQVGGSPAQGPIPYLDDDIPLLEVEEEPVSLELGDVSLVSVSPEGLQPASNTGSRGHLIVQLQELLHHWVLWSAVKSRWVIVGLFVSILILSLVFASRLRPASRAPLLFRPDTNIQVLLDLKYNLSAEGISCITCSGLFQEKPHSLQNNIRTSLEKKRRGSGVPWASRPEATLQDFPGTVYISKVKSQGHPAVYRLSLNASLPAPWQAVSPGDGEVPSFQVYRAPFGNFTKKLTACMSTVGLLQAASPSRKWMLTTLACDAKRGWKFDFSFYVATKEQQHTRKLYFAQSHKPPFHGRVCMAPPGCLLSSSPDGPTKGFFFVPSEKVPKARLSATFGFNPCVNTGCGKPAVRPLVDTGAMVFVVFGIIGVNRTRQVDNHVIGDPGSVVYDSSFDLFKEIGHLCHLCKAIAANSELVKPGGAQCLPSGYSISSFLQMLHPECKELPEPNLLPGQLSHGAVGVREGRVQWISMAFESTTYKGKSSFQTYSDYLRWESFLQQQLQALPEGSVLRRGFQTCEHWKQIFMEIVGVQSALCGLVLSLLICVAAVAVFTTHILLLLPVLLSILGIVCLVVTIMYWSGWEMGAVEAISLSILVGSSVDYCVHLVEGYLLAGENLPPHQAEDARTQRQWRTLEAVRHVGVAIVSSALTTVIATVPLFFCIIAPFAKFGKIVALNTGVSILYTLTVSTALLGIMAPSSFTRTRTSFLKALGAVLLAGALGLGACLVLLQSGYKIPLPAGASL.

Residues 1-73 (MDTEDDPLLQ…LGWAFTNPCC (73 aa)) are Cytoplasmic-facing. The interval 16–40 (EEQEEEEATGETFLGAQKPGPQPGA) is disordered. Residues 74-94 (AGLVLFLGCSIPMALSAFMFL) form a helical membrane-spanning segment. At 95–462 (YYPPLDIDIS…YEVRRTFNND (368 aa)) the chain is on the lumenal side. A disordered region spans residues 162 to 248 (GNRSRQASRA…HAAVAANQSR (87 aa)). Asparagine 163 carries N-linked (GlcNAc...) asparagine glycosylation. Residues 190–199 (SAAQKPTANR) show a composition bias toward polar residues. One can recognise an SSD domain in the interval 457–615 (RTFNNDMLLA…LVTMPAALGL (159 aa)). A helical membrane pass occupies residues 463–483 (MLLAFISSSCIAALVYILTSC). Serine 484 is a topological domain (cytoplasmic). The helical transmembrane segment at 485 to 505 (VFLSFFGIASIGLSCLVALFL) threads the bilayer. At 506–508 (YHV) the chain is on the lumenal side. A helical transmembrane segment spans residues 509–529 (VFGIQYLGILNGVAAFVIVGI). Topologically, residues 530–573 (GVDDVFVFINTYRQATHLEDPQLRMIHTVQTAGKATFFTSLTTA) are cytoplasmic. The helical transmembrane segment at 574–594 (AAYAANVFSQIPAVHDFGLFM) threads the bilayer. A topological domain (lumenal) is located at residue serine 595. The helical transmembrane segment at 596 to 616 (LIVSCCWLAVLVTMPAALGLW) threads the bilayer. The Cytoplasmic portion of the chain corresponds to 617–729 (SLYLAPLESS…WVLWSAVKSR (113 aa)). Residues 730-750 (WVIVGLFVSILILSLVFASRL) form a helical membrane-spanning segment. Residues 751–1182 (RPASRAPLLF…IFMEIVGVQS (432 aa)) are Lumenal-facing. An N-linked (GlcNAc...) asparagine glycan is attached at asparagine 1021. A helical transmembrane segment spans residues 1183–1203 (ALCGLVLSLLICVAAVAVFTT). A topological domain (cytoplasmic) is located at residue histidine 1204. Residues 1205-1225 (ILLLLPVLLSILGIVCLVVTI) form a helical membrane-spanning segment. Over 1226–1291 (MYWSGWEMGA…TLEAVRHVGV (66 aa)) the chain is Lumenal. A helical transmembrane segment spans residues 1292-1312 (AIVSSALTTVIATVPLFFCII). The Cytoplasmic portion of the chain corresponds to 1313–1320 (APFAKFGK). Residues 1321-1341 (IVALNTGVSILYTLTVSTALL) form a helical membrane-spanning segment. Residues 1342-1358 (GIMAPSSFTRTRTSFLK) are Lumenal-facing. Residues 1359 to 1379 (ALGAVLLAGALGLGACLVLLQ) form a helical membrane-spanning segment. Over 1380–1392 (SGYKIPLPAGASL) the chain is Cytoplasmic.

This sequence belongs to the patched family. Expressed in brain and testis.

The protein resides in the endoplasmic reticulum membrane. The protein localises to the nucleus membrane. It is found in the cytoplasmic vesicle membrane. Its function is as follows. Plays a role in neuronal proliferation and differentiation. Plays a role in the accumulation of cellular cholesterol. Involved in intracellular lipid droplet formation. May contribute to cholesterol homeostasis in neuronal cells. This chain is Protein dispatched homolog 3, found in Homo sapiens (Human).